Consider the following 452-residue polypeptide: Chromosomal replication initiator protein DnaA (452 aa).

The tract at residues 1 to 73 is domain I, interacts with DnaA modulators; it reads MSPNSTLWQT…NELATKYSST (73 aa). Positions 73 to 102 are domain II; sequence TPVRLKFVSQEEVIEEPVADRKLTIDYRQG. The segment at 103–323 is domain III, AAA+ region; sequence NLNSTYTFDS…GALIRLISYA (221 aa). Residues G147, G149, K150, and T151 each coordinate ATP. The interval 324–452 is domain IV, binds dsDNA; sequence QTFNLEITMN…VKKIDSPLLK (129 aa).

It belongs to the DnaA family. In terms of assembly, oligomerizes as a right-handed, spiral filament on DNA at oriC.

It is found in the cytoplasm. Plays an essential role in the initiation and regulation of chromosomal replication. ATP-DnaA binds to the origin of replication (oriC) to initiate formation of the DNA replication initiation complex once per cell cycle. Binds the DnaA box (a 9 base pair repeat at the origin) and separates the double-stranded (ds)DNA. Forms a right-handed helical filament on oriC DNA; dsDNA binds to the exterior of the filament while single-stranded (ss)DNA is stabiized in the filament's interior. The ATP-DnaA-oriC complex binds and stabilizes one strand of the AT-rich DNA unwinding element (DUE), permitting loading of DNA polymerase. After initiation quickly degrades to an ADP-DnaA complex that is not apt for DNA replication. Binds acidic phospholipids. This chain is Chromosomal replication initiator protein DnaA, found in Acholeplasma laidlawii (strain PG-8A).